Consider the following 650-residue polypeptide: Vitrin (650 aa).

The signal sequence occupies residues 1-26 (MGIVVPTMKASVIEVLLVLLVTGIHS). Residues 40 to 133 (TVPQINCDVK…LSLPRWRESF (94 aa)) enclose the LCCL domain. Cystine bridges form between Cys-46-Cys-62 and Cys-66-Cys-86. Residues 198–226 (RSTSKPFAASVTNSPRPQPVGHRSQEMEE) form a disordered region. 2 VWFA domains span residues 265 to 450 (DLSF…VKRV) and 467 to 640 (DIGF…IQNI). An N-linked (GlcNAc...) asparagine glycan is attached at Asn-492.

Binds dermatan sulfate and chondroitin sulfate.

The protein localises to the secreted. Its subcellular location is the extracellular space. It is found in the extracellular matrix. Its function is as follows. Promotes matrix assembly and cell adhesiveness. Plays a role in spinal cord formation by regulating the proliferation and differentiation of neural stem cells. The chain is Vitrin (Vit) from Mus musculus (Mouse).